A 139-amino-acid polypeptide reads, in one-letter code: MKPAARRRARECAVQALYSWQISKNDIADVEYQFLAEQDVKDVDITYFRELVGGVATNSAYLDGLMKPYLSRQLEELGQVEKAILRISLFELSKRSDVPYKVAINEGIELAKVFGAEDSHKFVNGVLDKAAPQIRPNRK.

Belongs to the NusB family.

Functionally, involved in transcription antitermination. Required for transcription of ribosomal RNA (rRNA) genes. Binds specifically to the boxA antiterminator sequence of the ribosomal RNA (rrn) operons. This is Transcription antitermination protein NusB from Erwinia tasmaniensis (strain DSM 17950 / CFBP 7177 / CIP 109463 / NCPPB 4357 / Et1/99).